The primary structure comprises 281 residues: NADPH-dependent 7-cyano-7-deazaguanine reductase (281 aa).

81–83 lines the substrate pocket; sequence IES. NADPH is bound at residue 83–84; it reads SK. C188 acts as the Thioimide intermediate in catalysis. D195 (proton donor) is an active-site residue. 227-228 contributes to the substrate binding site; the sequence is HE. 256 to 257 is an NADPH binding site; sequence RG.

The protein belongs to the GTP cyclohydrolase I family. QueF type 2 subfamily. Homodimer.

It is found in the cytoplasm. It carries out the reaction 7-aminomethyl-7-carbaguanine + 2 NADP(+) = 7-cyano-7-deazaguanine + 2 NADPH + 3 H(+). The protein operates within tRNA modification; tRNA-queuosine biosynthesis. In terms of biological role, catalyzes the NADPH-dependent reduction of 7-cyano-7-deazaguanine (preQ0) to 7-aminomethyl-7-deazaguanine (preQ1). In Polaromonas naphthalenivorans (strain CJ2), this protein is NADPH-dependent 7-cyano-7-deazaguanine reductase.